The primary structure comprises 195 residues: Phosphoheptose isomerase (195 aa).

Positions 36–195 (LVDSLKGDGI…IIEKELFGLD (160 aa)) constitute an SIS domain. 51 to 53 (NGG) serves as a coordination point for substrate. Residues H60 and E64 each contribute to the Zn(2+) site. Residues E64, 95 to 96 (ND), 121 to 123 (TTS), S126, and Q173 each bind substrate. Residues Q173 and H181 each contribute to the Zn(2+) site.

Belongs to the SIS family. GmhA subfamily. Zn(2+) is required as a cofactor.

The protein resides in the cytoplasm. It catalyses the reaction 2 D-sedoheptulose 7-phosphate = D-glycero-alpha-D-manno-heptose 7-phosphate + D-glycero-beta-D-manno-heptose 7-phosphate. Its pathway is carbohydrate biosynthesis; D-glycero-D-manno-heptose 7-phosphate biosynthesis; D-glycero-alpha-D-manno-heptose 7-phosphate and D-glycero-beta-D-manno-heptose 7-phosphate from sedoheptulose 7-phosphate: step 1/1. Catalyzes the isomerization of sedoheptulose 7-phosphate in D-glycero-D-manno-heptose 7-phosphate. The chain is Phosphoheptose isomerase from Leptospira biflexa serovar Patoc (strain Patoc 1 / Ames).